A 582-amino-acid chain; its full sequence is Putative phospholipase B-like 2 (582 aa).

The N-terminal stretch at 1-42 (MTRLIRSKKQFLIRSLHSVFYYLGSLLHSTFEMNVFIGLLLA) is a signal peptide. Asparagine 91, asparagine 141, asparagine 178, asparagine 224, and asparagine 318 each carry an N-linked (GlcNAc...) asparagine glycan. Cysteine 139 and cysteine 146 are oxidised to a cystine. Cysteine 480 and cysteine 482 are disulfide-bonded. N-linked (GlcNAc...) asparagine glycosylation occurs at asparagine 502.

This sequence belongs to the phospholipase B-like family.

Its subcellular location is the secreted. Putative phospholipase. The chain is Putative phospholipase B-like 2 from Caenorhabditis elegans.